The chain runs to 42 residues: Beta-2-microglobulin (42 aa).

An Ig-like C1-type domain is found at 5–42; it reads PKIQVYSRHPAZBGKPBFLBCYVSGFHPXZIZIBLLKB.

In terms of assembly, heterodimer of an alpha chain and a beta chain. Beta-2-microglobulin is the beta-chain of major histocompatibility complex class I molecules.

It is found in the secreted. Its function is as follows. Component of the class I major histocompatibility complex (MHC). Involved in the presentation of peptide antigens to the immune system. The protein is Beta-2-microglobulin (B2M) of Canis lupus familiaris (Dog).